Here is a 251-residue protein sequence, read N- to C-terminus: Triosephosphate isomerase (251 aa).

Residue 9-11 coordinates substrate; that stretch reads NWK. H95 acts as the Electrophile in catalysis. E167 functions as the Proton acceptor in the catalytic mechanism. Residues G173, S212, and 233–234 contribute to the substrate site; that span reads GG.

The protein belongs to the triosephosphate isomerase family. In terms of assembly, homodimer.

The protein resides in the cytoplasm. It carries out the reaction D-glyceraldehyde 3-phosphate = dihydroxyacetone phosphate. It functions in the pathway carbohydrate biosynthesis; gluconeogenesis. The protein operates within carbohydrate degradation; glycolysis; D-glyceraldehyde 3-phosphate from glycerone phosphate: step 1/1. Its function is as follows. Involved in the gluconeogenesis. Catalyzes stereospecifically the conversion of dihydroxyacetone phosphate (DHAP) to D-glyceraldehyde-3-phosphate (G3P). This Pseudomonas putida (strain W619) protein is Triosephosphate isomerase.